Here is a 285-residue protein sequence, read N- to C-terminus: uncharacterized protein (285 aa).

The region spanning 92–199 (TLLLADVEES…PTINRTARLR (108 aa)) is the Guanylate cyclase domain.

The protein belongs to the adenylyl cyclase class-4/guanylyl cyclase family.

This is an uncharacterized protein from Mycobacterium tuberculosis (strain ATCC 25618 / H37Rv).